Reading from the N-terminus, the 749-residue chain is 5-methyltetrahydropteroyltriglutamate--homocysteine methyltransferase (749 aa).

Residues 15-18 (RELK) and K114 each bind 5-methyltetrahydropteroyltri-L-glutamate. Residues 425 to 427 (IGS) and E478 each bind L-homocysteine. L-methionine-binding positions include 425 to 427 (IGS) and E478. W555 lines the 5-methyltetrahydropteroyltri-L-glutamate pocket. D593 is a binding site for L-homocysteine. An L-methionine-binding site is contributed by D593. A 5-methyltetrahydropteroyltri-L-glutamate-binding site is contributed by E599. The Zn(2+) site is built by H636, C638, and E660. Residue H689 is the Proton donor of the active site. Residue C721 coordinates Zn(2+).

Belongs to the vitamin-B12 independent methionine synthase family. The cofactor is Zn(2+).

It carries out the reaction 5-methyltetrahydropteroyltri-L-glutamate + L-homocysteine = tetrahydropteroyltri-L-glutamate + L-methionine. It functions in the pathway amino-acid biosynthesis; L-methionine biosynthesis via de novo pathway; L-methionine from L-homocysteine (MetE route): step 1/1. In terms of biological role, catalyzes the transfer of a methyl group from 5-methyltetrahydrofolate to homocysteine resulting in methionine formation. This Streptococcus pneumoniae serotype 2 (strain D39 / NCTC 7466) protein is 5-methyltetrahydropteroyltriglutamate--homocysteine methyltransferase.